Reading from the N-terminus, the 76-residue chain is UPF0291 protein BC_1827 (76 aa).

It belongs to the UPF0291 family.

It is found in the cytoplasm. In Bacillus cereus (strain ATCC 14579 / DSM 31 / CCUG 7414 / JCM 2152 / NBRC 15305 / NCIMB 9373 / NCTC 2599 / NRRL B-3711), this protein is UPF0291 protein BC_1827.